Here is a 550-residue protein sequence, read N- to C-terminus: Hydroxylamine reductase (550 aa).

[4Fe-4S] cluster contacts are provided by C7, C10, C19, and C25. Positions 244, 268, 312, 405, 433, 458, 493, and 495 each coordinate hybrid [4Fe-2O-2S] cluster. C405 carries the cysteine persulfide modification.

The protein belongs to the HCP family. The cofactor is [4Fe-4S] cluster. It depends on hybrid [4Fe-2O-2S] cluster as a cofactor.

It is found in the cytoplasm. It carries out the reaction A + NH4(+) + H2O = hydroxylamine + AH2 + H(+). In terms of biological role, catalyzes the reduction of hydroxylamine to form NH(3) and H(2)O. This is Hydroxylamine reductase from Porphyromonas gingivalis (strain ATCC 33277 / DSM 20709 / CIP 103683 / JCM 12257 / NCTC 11834 / 2561).